The sequence spans 158 residues: Cyclic pyranopterin monophosphate synthase (158 aa).

Substrate contacts are provided by residues 74 to 76 and 112 to 113; these read MCH and ME. Asp127 is an active-site residue.

Belongs to the MoaC family. Homohexamer; trimer of dimers.

It catalyses the reaction (8S)-3',8-cyclo-7,8-dihydroguanosine 5'-triphosphate = cyclic pyranopterin phosphate + diphosphate. It participates in cofactor biosynthesis; molybdopterin biosynthesis. Catalyzes the conversion of (8S)-3',8-cyclo-7,8-dihydroguanosine 5'-triphosphate to cyclic pyranopterin monophosphate (cPMP). The sequence is that of Cyclic pyranopterin monophosphate synthase from Helicobacter pylori (strain ATCC 700392 / 26695) (Campylobacter pylori).